Reading from the N-terminus, the 494-residue chain is Probable cytosol aminopeptidase (494 aa).

Mn(2+)-binding residues include K260 and D265. K272 is a catalytic residue. Mn(2+) is bound by residues D283, D342, and E344. Residue R346 is part of the active site.

Belongs to the peptidase M17 family. The cofactor is Mn(2+).

It is found in the cytoplasm. It carries out the reaction Release of an N-terminal amino acid, Xaa-|-Yaa-, in which Xaa is preferably Leu, but may be other amino acids including Pro although not Arg or Lys, and Yaa may be Pro. Amino acid amides and methyl esters are also readily hydrolyzed, but rates on arylamides are exceedingly low.. The catalysed reaction is Release of an N-terminal amino acid, preferentially leucine, but not glutamic or aspartic acids.. In terms of biological role, presumably involved in the processing and regular turnover of intracellular proteins. Catalyzes the removal of unsubstituted N-terminal amino acids from various peptides. The protein is Probable cytosol aminopeptidase of Bacillus cereus (strain AH187).